Here is a 469-residue protein sequence, read N- to C-terminus: Histone acetyltransferase ESA1 (469 aa).

Residues 1-26 form a disordered region; that stretch reads MALAEADLPNGKTNGKASGSEETPAP. A compositionally biased stretch (polar residues) spans 11–21; that stretch reads GKTNGKASGSE. The Tudor-knot domain occupies 39–92; it reads LRVGCKVHVEKDGEDRVAEILSVQMRRGNLEFYVHYVEFNKRLDERIAATRVDL. The segment at 98 to 163 is disordered; it reads WPEPEKPKKP…GTTQDPDNFN (66 aa). Residues 118–127 show a composition bias toward basic residues; that stretch reads EKKKNPSKKQ. 2 stretches are compositionally biased toward polar residues: residues 130 to 139 and 150 to 160; these read TDSAATTPGA and LQVNGTTQDPD. The region spanning 185–457 is the MYST-type HAT domain; sequence ARVRNLQRIV…VNSELLKWKP (273 aa). The C2HC MYST-type; degenerate zinc-finger motif lies at 218-243; the sequence is IYICDFTLCYFGSKKQFERFRSKSTL. Lys285 is subject to N6-acetyllysine; by autocatalysis. Residues 326–330 and 335–341 each bind acetyl-CoA; these read ACILT and QRHGYGR. Glu361 serves as the catalytic Proton donor/acceptor. Ser365 contributes to the acetyl-CoA binding site.

Belongs to the MYST (SAS/MOZ) family. Component of the NuA4 histone acetyltransferase complex. Autoacetylation at Lys-285 is required for proper function.

The protein resides in the nucleus. Its subcellular location is the chromosome. It carries out the reaction L-lysyl-[histone] + acetyl-CoA = N(6)-acetyl-L-lysyl-[histone] + CoA + H(+). The enzyme catalyses L-lysyl-[protein] + acetyl-CoA = N(6)-acetyl-L-lysyl-[protein] + CoA + H(+). It catalyses the reaction 2-hydroxyisobutanoyl-CoA + L-lysyl-[protein] = N(6)-(2-hydroxyisobutanoyl)-L-lysyl-[protein] + CoA + H(+). The catalysed reaction is (2E)-butenoyl-CoA + L-lysyl-[protein] = N(6)-(2E)-butenoyl-L-lysyl-[protein] + CoA + H(+). In terms of biological role, catalytic component of the NuA4 histone acetyltransferase (HAT) complex which is involved in epigenetic transcriptional activation of selected genes principally by acetylation of nucleosomal histones H4, H3, H2B, H2A and H2A variant H2A.Z. Acetylates histone H4 to form H4K5ac, H4K8ac, H4K12ac and H4K16ac, histone H3 to form H3K14ac, and histone H2A to form H2AK4ac and H2AK7ac. The NuA4 complex is involved in the DNA damage response and is required for chromosome segregation. The NuA4 complex plays a direct role in repair of DNA double-strand breaks (DSBs) through homologous recombination. Recruitment to promoters depends on H3K4me. Also acetylates non-histone proteins. In addition to protein acetyltransferase, can use different acyl-CoA substrates, such as 2-hydroxyisobutanoyl-CoA (2-hydroxyisobutyryl-CoA) or (2E)-butenoyl-CoA (crotonyl-CoA), and is able to mediate protein 2-hydroxyisobutyrylation and crotonylation, respectively. In Yarrowia lipolytica (strain CLIB 122 / E 150) (Yeast), this protein is Histone acetyltransferase ESA1 (ESA1).